The sequence spans 79 residues: Acyl carrier protein (79 aa).

The region spanning Ser2 to Thr77 is the Carrier domain. Ser37 bears the O-(pantetheine 4'-phosphoryl)serine mark.

The protein belongs to the acyl carrier protein (ACP) family. Post-translationally, 4'-phosphopantetheine is transferred from CoA to a specific serine of apo-ACP by AcpS. This modification is essential for activity because fatty acids are bound in thioester linkage to the sulfhydryl of the prosthetic group.

The protein resides in the cytoplasm. It participates in lipid metabolism; fatty acid biosynthesis. Carrier of the growing fatty acid chain in fatty acid biosynthesis. This Methylocella silvestris (strain DSM 15510 / CIP 108128 / LMG 27833 / NCIMB 13906 / BL2) protein is Acyl carrier protein.